The sequence spans 239 residues: tRNA (guanine-N(7)-)-methyltransferase (239 aa).

S-adenosyl-L-methionine-binding residues include glutamate 69, glutamate 94, aspartate 121, and aspartate 144. Aspartate 144 is a catalytic residue. Residues lysine 148, aspartate 180, and 217–220 (TKFE) each bind substrate.

This sequence belongs to the class I-like SAM-binding methyltransferase superfamily. TrmB family.

It catalyses the reaction guanosine(46) in tRNA + S-adenosyl-L-methionine = N(7)-methylguanosine(46) in tRNA + S-adenosyl-L-homocysteine. It participates in tRNA modification; N(7)-methylguanine-tRNA biosynthesis. Its function is as follows. Catalyzes the formation of N(7)-methylguanine at position 46 (m7G46) in tRNA. This Alcanivorax borkumensis (strain ATCC 700651 / DSM 11573 / NCIMB 13689 / SK2) protein is tRNA (guanine-N(7)-)-methyltransferase.